Consider the following 695-residue polypeptide: Elongation factor G 2 (695 aa).

In terms of domain architecture, tr-type G spans 5–280 (SKYRNIGIFA…AVVDYLPSPT (276 aa)). Residues 14–21 (AHVDAGKT), 78–82 (DTPGH), and 132–135 (NKLD) contribute to the GTP site.

The protein belongs to the TRAFAC class translation factor GTPase superfamily. Classic translation factor GTPase family. EF-G/EF-2 subfamily.

The protein localises to the cytoplasm. In terms of biological role, catalyzes the GTP-dependent ribosomal translocation step during translation elongation. During this step, the ribosome changes from the pre-translocational (PRE) to the post-translocational (POST) state as the newly formed A-site-bound peptidyl-tRNA and P-site-bound deacylated tRNA move to the P and E sites, respectively. Catalyzes the coordinated movement of the two tRNA molecules, the mRNA and conformational changes in the ribosome. The sequence is that of Elongation factor G 2 from Vibrio vulnificus (strain YJ016).